The following is a 167-amino-acid chain: Intermembrane phospholipid transport system binding protein MlaD (167 aa).

Topologically, residues 1-6 (MRQTIK) are cytoplasmic. Residues 7 to 27 (YEFWVGLFLLLGIGALVFLGL) traverse the membrane as a helical; Signal-anchor for type II membrane protein segment. Over 28–167 (RVANVQGFAE…GNEKSESTEQ (140 aa)) the chain is Periplasmic. An MCE/MlaD region spans residues 40 to 118 (SYTVTATFDN…GEQYIALTMG (79 aa)).

The protein belongs to the MlaD family. The complex is composed of two ATP-binding proteins (MlaF), two transmembrane proteins (MlaE), two cytoplasmic solute-binding proteins (MlaB) and six periplasmic solute-binding proteins (MlaD).

The protein resides in the cell inner membrane. Part of the ABC transporter complex MlaFEDB, which is involved in a phospholipid transport pathway that maintains lipid asymmetry in the outer membrane by retrograde trafficking of phospholipids from the outer membrane to the inner membrane. MlaD functions in substrate binding with strong affinity for phospholipids and modulates ATP hydrolytic activity of the complex. The protein is Intermembrane phospholipid transport system binding protein MlaD of Haemophilus influenzae (strain ATCC 51907 / DSM 11121 / KW20 / Rd).